Consider the following 147-residue polypeptide: Hordoindoline-B1 (147 aa).

A signal peptide spans Met-1–Ala-19. Positions Gln-20–Asn-28 are excised as a propeptide.

Post-translationally, five disulfide bonds are present. As to expression, found in endosperm and aleurone layer of developing kernels, but not in the embryo.

It localises to the membrane. Its subcellular location is the secreted. It is found in the extracellular space. Acts as a membranotoxin, probably through its antibacterial and antifungal activities, contributing to the defense mechanism of the plant against predators. Forms monovalent cation-selective ion channels in membranes. Contributes to grain texture and hardness. The sequence is that of Hordoindoline-B1 (HINB-1) from Hordeum vulgare (Barley).